Consider the following 1516-residue polypeptide: Myosin-14 (1516 aa).

One can recognise a Myosin N-terminal SH3-like domain in the interval 7–56; that stretch reads NVGSCVWVEDPEVAWIDGEVIEVKGSDIKVKCTSGKTVAIKVSSAYPKDV. Positions 61 to 738 constitute a Myosin motor domain; that stretch reads SGVDDMTRLA…QMADLDARRN (678 aa). ATP contacts are provided by residues 155–162 and 208–216; these read GESGAGKT and NNNSSRFGK. Actin-binding stretches follow at residues 494–528, 530–553, 588–612, and 612–634; these read LIEKKAGGIISLLNEACMFPRATHETFAEKMYQTF, DHKHFSKPKLSRTDFTICHYAGDV, FPLLAEDANKKSKFSSISSRFKQQL, and LVTLLETLSTTEPHYIRCVKPNN. 6 IQ domains span residues 741 to 770, 764 to 793, 789 to 818, 812 to 841, 837 to 866, and 860 to 889; these read LGRAASRIQRKFRSYLSRKTFLMLRKVATN, LRKVATNMQAVCRGQLSRLIFEGLRRDAAV, RDAAVLEIQRDIRMHLARKSYKELYFAAVS, LYFAAVSIQLGIRGMASRGRLRFQRQDKAA, QDKAAIMIQSHCRKFLAQLHYQRLKKAAIT, and LKKAAITTQSAWRARLARKELRKLKMAAKE. Residues 890–1056 are a coiled coil; that stretch reads TGVLEAAKSK…ENKILRQKSL (167 aa). Residues 1061–1085 form a disordered region; it reads GHLPPTPVKGSQNGHFSSKESPFNG. Polar residues predominate over residues 1069 to 1084; sequence KGSQNGHFSSKESPFN. Positions 1158 to 1463 constitute a Dilute domain; sequence DRLVQMIGSA…IANMRVLMTE (306 aa).

The protein belongs to the TRAFAC class myosin-kinesin ATPase superfamily. Myosin family. Plant myosin class XI subfamily. Homodimer.

Its function is as follows. Myosin heavy chain that is required for the cell cycle-regulated transport of various organelles and proteins for their segregation. Functions by binding with its tail domain to receptor proteins on organelles and exerting force with its N-terminal motor domain against actin filaments, thereby transporting its cargo along polarized actin cables. The protein is Myosin-14 (XI-H) of Arabidopsis thaliana (Mouse-ear cress).